Reading from the N-terminus, the 149-residue chain is MRAVVQRVSFSEVRVEGKLRGRIKQGLMVLLGIKKGDSKAEGDYLLEKIVNLRIFPDEEGKMNRSLLDIEGEILLVSQFTLYGDARKGRRPSFSAAELPELAEALFDYCVDGLRQRGVQVETGTFGAEMLLSIENDGPCTILLDSEKLF.

The Gly-cisPro motif, important for rejection of L-amino acids motif lies at 137-138 (GP).

The protein belongs to the DTD family. In terms of assembly, homodimer.

Its subcellular location is the cytoplasm. The catalysed reaction is glycyl-tRNA(Ala) + H2O = tRNA(Ala) + glycine + H(+). It catalyses the reaction a D-aminoacyl-tRNA + H2O = a tRNA + a D-alpha-amino acid + H(+). In terms of biological role, an aminoacyl-tRNA editing enzyme that deacylates mischarged D-aminoacyl-tRNAs. Also deacylates mischarged glycyl-tRNA(Ala), protecting cells against glycine mischarging by AlaRS. Acts via tRNA-based rather than protein-based catalysis; rejects L-amino acids rather than detecting D-amino acids in the active site. By recycling D-aminoacyl-tRNA to D-amino acids and free tRNA molecules, this enzyme counteracts the toxicity associated with the formation of D-aminoacyl-tRNA entities in vivo and helps enforce protein L-homochirality. The chain is D-aminoacyl-tRNA deacylase from Syntrophomonas wolfei subsp. wolfei (strain DSM 2245B / Goettingen).